The primary structure comprises 268 residues: 4-hydroxy-tetrahydrodipicolinate reductase (268 aa).

9-14 (GCSGRM) contacts NAD(+). Arg-36 contributes to the NADP(+) binding site. NAD(+) is bound by residues 98–100 (GTT) and 122–125 (APNT). His-155 functions as the Proton donor/acceptor in the catalytic mechanism. A (S)-2,3,4,5-tetrahydrodipicolinate-binding site is contributed by His-156. Lys-159 acts as the Proton donor in catalysis. 165-166 (GT) contacts (S)-2,3,4,5-tetrahydrodipicolinate.

The protein belongs to the DapB family.

It localises to the cytoplasm. It carries out the reaction (S)-2,3,4,5-tetrahydrodipicolinate + NAD(+) + H2O = (2S,4S)-4-hydroxy-2,3,4,5-tetrahydrodipicolinate + NADH + H(+). It catalyses the reaction (S)-2,3,4,5-tetrahydrodipicolinate + NADP(+) + H2O = (2S,4S)-4-hydroxy-2,3,4,5-tetrahydrodipicolinate + NADPH + H(+). It participates in amino-acid biosynthesis; L-lysine biosynthesis via DAP pathway; (S)-tetrahydrodipicolinate from L-aspartate: step 4/4. In terms of biological role, catalyzes the conversion of 4-hydroxy-tetrahydrodipicolinate (HTPA) to tetrahydrodipicolinate. The protein is 4-hydroxy-tetrahydrodipicolinate reductase of Colwellia psychrerythraea (strain 34H / ATCC BAA-681) (Vibrio psychroerythus).